We begin with the raw amino-acid sequence, 1578 residues long: Formin-2 (1578 aa).

3 stretches are compositionally biased toward basic and acidic residues: residues 1–17 (MGNQDGKLKRSAGDASH), 26–35 (AGPRDAEITK), and 57–66 (TSKKKSKSDS). The interval 1–73 (MGNQDGKLKR…SDSRASVFSN (73 aa)) is disordered. Ser-89 carries the phosphoserine modification. Disordered stretches follow at residues 208–230 (KLLLQDSEEPAAPPTAISPQPGA), 244–383 (EAEK…PSPR), and 401–458 (RQLS…GLSR). Polar residues-rich tracts occupy residues 273–282 (SSGSHLTSET) and 290–300 (SAVTDSLSSPA). Residues 322-333 (DTDEECEEDAFE) are compositionally biased toward acidic residues. The segment covering 351–364 (ASQRLEKEPEEGMR) has biased composition (basic and acidic residues). Low complexity-rich tracts occupy residues 404 to 418 (SSPNHSPSQSPNQSP) and 427 to 442 (SVSRSSRTALASAAAP). 3 positions are modified to phosphoserine: Ser-459, Ser-489, and Ser-493. The tract at residues 587–634 (SMDYSEGQFPRREPSMWPSSKLPEEEPSPKDVDTEPKSSILESPKKCS) is disordered. A compositionally biased stretch (basic and acidic residues) spans 608-622 (LPEEEPSPKDVDTEP). Positions 643–683 (DVKSEGQATVIQQLEQTIEDLRTKIAELEKQYPALDLEGPR) form a coiled coil. Disordered stretches follow at residues 714–765 (RTLE…SGPQ), 786–836 (DAQQ…GNNC), and 880–944 (PALQ…MGIS). Positions 735 to 1124 (PPPKAPPEGL…GCGFLFPPLP (390 aa)) constitute an FH1 domain. The segment covering 786 to 795 (DAQQIQSASQ) has biased composition (polar residues). Residues 803–817 (LGSDSQGQPSQPSLH) show a composition bias toward low complexity. Over residues 818–827 (TESETSHEHS) the composition is skewed to basic and acidic residues. Pro residues predominate over residues 893–944 (LPAPPQPPPLPGLGVPPPPPAPPLPGMGIPPPPPLPGMGIPPPPPLPGMGIS). 12 consecutive repeat copies span residues 919-929 (MGIPPPPPLPG), 930-940 (MGIPPPPPLPG), 941-951 (MGISPLPPLPG), 952-962 (MGIPPPPPLPG), 963-973 (VGIPPPPPLPG), 974-984 (VGIPPPPPLPG), 985-995 (VGIPPPPPLPG), 996-1006 (VGIPPPPPLPG), 1007-1017 (VGIPPPPPLPG), 1018-1028 (VGIPPPPPLPG), 1029-1039 (VGIPPPPPLPG), and 1040-1050 (VGIPPPPPLPG). A 12 X 11 AA tandem repeats of [MV]-G-I-P-P-P-P-P-L-P-G region spans residues 919-1039 (MGIPPPPPLP…GIPPPPPLPG (121 aa)). Positions 1037-1097 (LPGVGIPPPP…PPPPLLPGSG (61 aa)) are enriched in pro residues. The tract at residues 1037 to 1108 (LPGVGIPPPP…PHSSQVGSST (72 aa)) is disordered. Positions 1139 to 1554 (RKQLIEPCRP…KEAEEVCRQK (416 aa)) constitute an FH2 domain. A coiled-coil region spans residues 1419–1455 (QELFQASQMKFEDFQKDLRKLKKDLKACEAEAGKVYQ). An important for interaction with SPIRE1 region spans residues 1571–1578 (KAKISMKT).

Belongs to the formin homology family. Cappuccino subfamily. Interacts with SPIRE1. Binds actin. Interacts with CDKN1A. Detected in brain and in oocytes (at protein level). Expressed almost exclusively in the developing and mature central nervous system. Detected in oocytes.

Its subcellular location is the cytoplasm. It localises to the cytoskeleton. The protein localises to the cytosol. It is found in the perinuclear region. The protein resides in the nucleus. Its subcellular location is the nucleolus. It localises to the cell membrane. The protein localises to the cell cortex. It is found in the cytoplasmic vesicle membrane. Its function is as follows. Actin-binding protein that is involved in actin cytoskeleton assembly and reorganization. Acts as an actin nucleation factor and promotes assembly of actin filaments together with SPIRE1 and SPIRE2. Involved in intracellular vesicle transport along actin fibers, providing a novel link between actin cytoskeleton dynamics and intracellular transport. Required for asymmetric spindle positioning, asymmetric oocyte division and polar body extrusion during female germ cell meiosis. Plays a role in responses to DNA damage, cellular stress and hypoxia by protecting CDKN1A against degradation, and thereby plays a role in stress-induced cell cycle arrest. Also acts in the nucleus: together with SPIRE1 and SPIRE2, promotes assembly of nuclear actin filaments in response to DNA damage in order to facilitate movement of chromatin and repair factors after DNA damage. Protects cells against apoptosis by protecting CDKN1A against degradation. The polypeptide is Formin-2 (Fmn2) (Mus musculus (Mouse)).